The primary structure comprises 919 residues: Calcium-activated chloride channel regulator 4 (919 aa).

An N-terminal signal peptide occupies residues 1-21; that stretch reads MGLFRGFVFLLVLCLLHQSNT. A metalloprotease domain region spans residues 45–199; it reads DEKIIEQIED…GISGRNRVYK (155 aa). Asn-75 carries an N-linked (GlcNAc...) asparagine glycan. Residue His-155 coordinates Zn(2+). Residue Glu-156 is part of the active site. Positions 159 and 166 each coordinate Zn(2+). The VWFA domain occupies 306 to 476; the sequence is IVCLVLDKSG…NGLIDAFGAL (171 aa). 9 N-linked (GlcNAc...) asparagine glycosylation sites follow: Asn-340, Asn-504, Asn-542, Asn-588, Asn-628, Asn-811, Asn-832, Asn-837, and Asn-852. The disordered stretch occupies residues 870-893; sequence ANPDDIDPTPTPTPTPTPDKSHNS. Residues 895-915 traverse the membrane as a helical segment; sequence VNISTLVLSVIGSVVIVNFIL.

It belongs to the CLCR family. In terms of processing, the translation product is autoproteolytically cleaved by the metalloprotease domain in the endoplasmic reticulum into a N-terminal and a C-terminal products that remain physically associated with each other. The cleavage is necessary for calcium-activated chloride channel (CaCC) activation activity. Primarily expressed in the digestive tract, mainly in colon. Detected in smaller amounts in brain, urogenital organs, testis, and salivary and mammary glands. Highly expressed in the epithelial layer and submucosal gland of the inferior turbinate mucosa. Lower levels in the epithelial layer of nasal polyp.

It is found in the cell membrane. It localises to the apical cell membrane. The protein resides in the secreted. In terms of biological role, may be involved in mediating calcium-activated chloride conductance. The protein is Calcium-activated chloride channel regulator 4 (CLCA4) of Homo sapiens (Human).